The sequence spans 57 residues: Protein translocase subunit SecE (57 aa).

The helical transmembrane segment at 33-53 threads the bilayer; it reads GAGIFLVGLLGFIIFAVMSFL.

The protein belongs to the SecE/SEC61-gamma family. In terms of assembly, component of the Sec protein translocase complex. Heterotrimer consisting of SecY (alpha), SecG (beta) and SecE (gamma) subunits. The heterotrimers can form oligomers, although 1 heterotrimer is thought to be able to translocate proteins. Interacts with the ribosome. May interact with SecDF, and other proteins may be involved.

Its subcellular location is the cell membrane. Functionally, essential subunit of the Sec protein translocation channel SecYEG. Clamps together the 2 halves of SecY. May contact the channel plug during translocation. This chain is Protein translocase subunit SecE, found in Haloferax mediterranei (strain ATCC 33500 / DSM 1411 / JCM 8866 / NBRC 14739 / NCIMB 2177 / R-4) (Halobacterium mediterranei).